The primary structure comprises 364 residues: MREETREQAAPLRSGLTTGSCATATSLAAARLLLTGQRHDAVEITLPKGKVVQMRLEFCHLKGDMAEAGTLKDAGDDPDVTHGALLFSQVRLRAEPGVRFVAGAGVGTVTRPGLVLAVGEPAINPVPRKMISDHLLQLAGDCGYHGGFEVTVNVQGGEQLALKTMNPRLGILGGLSILGTSGIVRPFSCSAYIASIHQGIDVAHTNGYTHIAACTGNASEDTMRRVYNLPEIALIEMGDFVGAVLKHLRKVPVPRLTLCGGFGKISKLAAGHMDLHSRHSSIDLPQLAGWAAAIGADTALQQAIIAANTSQQALALAHAAGIALGDEVCRHALVFARSVVPAQVQVEVFAIDRQGGIVGKAGVA.

This sequence belongs to the CbiD family.

The enzyme catalyses Co-precorrin-5B + S-adenosyl-L-methionine = Co-precorrin-6A + S-adenosyl-L-homocysteine. The protein operates within cofactor biosynthesis; adenosylcobalamin biosynthesis; cob(II)yrinate a,c-diamide from sirohydrochlorin (anaerobic route): step 6/10. Catalyzes the methylation of C-1 in cobalt-precorrin-5B to form cobalt-precorrin-6A. The sequence is that of Cobalt-precorrin-5B C(1)-methyltransferase from Pseudomonas entomophila (strain L48).